Consider the following 682-residue polypeptide: Polyadenylate-binding protein 5 (682 aa).

RRM domains lie at 59-136, 146-223, 239-316, and 342-419; these read SSLY…LSNR, GNVF…HFVR, TNVY…RAQK, and SNLY…LAQR. In terms of domain architecture, PABC spans 588 to 665; sequence TISKLASDLA…ALDVLRRSAD (78 aa). Ser-600 carries the phosphoserine modification.

The protein belongs to the polyadenylate-binding protein type-1 family. Expressed predominantly in immature flowers but also at lower levels in mature flowers and siliques. Detected in tapetum, pollen, ovules and developing seeds. Also detected in primary inflorescences and immature siliques.

It localises to the cytoplasm. The protein resides in the nucleus. Its function is as follows. Binds the poly(A) tail of mRNA. Appears to be an important mediator of the multiple roles of the poly(A) tail in mRNA biogenesis, stability and translation. In Arabidopsis thaliana (Mouse-ear cress), this protein is Polyadenylate-binding protein 5 (PAB5).